Reading from the N-terminus, the 297-residue chain is N-acetylneuraminate lyase (297 aa).

Aceneuramate is bound by residues S47 and T48. Y137 serves as the catalytic Proton donor. The active-site Schiff-base intermediate with substrate is the K165. Positions 167, 189, 191, 192, and 208 each coordinate aceneuramate.

Belongs to the DapA family. NanA subfamily. In terms of assembly, homotetramer.

Its subcellular location is the cytoplasm. The enzyme catalyses aceneuramate = aldehydo-N-acetyl-D-mannosamine + pyruvate. It participates in amino-sugar metabolism; N-acetylneuraminate degradation; D-fructose 6-phosphate from N-acetylneuraminate: step 1/5. Catalyzes the reversible aldol cleavage of N-acetylneuraminic acid (sialic acid; Neu5Ac) to form pyruvate and N-acetylmannosamine (ManNAc) via a Schiff base intermediate. The protein is N-acetylneuraminate lyase of Escherichia coli O139:H28 (strain E24377A / ETEC).